Reading from the N-terminus, the 503-residue chain is Cytochrome P450 3A13 (503 aa).

Cysteine 442 serves as a coordination point for heme.

This sequence belongs to the cytochrome P450 family. Heme serves as cofactor.

It is found in the endoplasmic reticulum membrane. The protein resides in the microsome membrane. It catalyses the reaction an organic molecule + reduced [NADPH--hemoprotein reductase] + O2 = an alcohol + oxidized [NADPH--hemoprotein reductase] + H2O + H(+). Functionally, can activate aflatoxin B1 to a genotoxic product. This Mus musculus (Mouse) protein is Cytochrome P450 3A13 (Cyp3a13).